The following is a 181-amino-acid chain: Regulator of G-protein signaling 10 (181 aa).

The segment at Met1–Leu32 is disordered. Low complexity predominate over residues Gly23–Leu32. Phosphoserine is present on residues Ser24 and Ser41. An RGS domain is found at Ser41–Lys156. The S-palmitoyl cysteine moiety is linked to residue Cys74. Residues Thr158–Thr181 form a disordered region. At Ser176 the chain carries Phosphoserine.

In terms of assembly, interacts with GNAZ, GNAI1 and GNAI3. Associates specifically with the activated, GTP-bound forms of GNAZ and GNAI3.

The protein resides in the cytoplasm. It is found in the cytosol. The protein localises to the nucleus. Functionally, regulates G protein-coupled receptor signaling cascades, including signaling downstream of the muscarinic acetylcholine receptor CHRM2. Inhibits signal transduction by increasing the GTPase activity of G protein alpha subunits, thereby driving them into their inactive GDP-bound form. Modulates the activity of potassium channels that are activated in response to CHRM2 signaling. Activity on GNAZ is inhibited by palmitoylation of the G-protein. This Homo sapiens (Human) protein is Regulator of G-protein signaling 10 (RGS10).